The chain runs to 391 residues: Elongation factor Tu (391 aa).

Positions 10 to 201 (KPHVNIGTIG…AVDEYIPTPA (192 aa)) constitute a tr-type G domain. The tract at residues 19-26 (GHVDHGKT) is G1. 19–26 (GHVDHGKT) lines the GTP pocket. Position 26 (threonine 26) interacts with Mg(2+). A G2 region spans residues 55-59 (GITIS). Positions 76–79 (DCPG) are G3. Residues 76 to 80 (DCPGH) and 131 to 134 (NKVD) contribute to the GTP site. The tract at residues 131-134 (NKVD) is G4. The G5 stretch occupies residues 169-171 (SAL).

The protein belongs to the TRAFAC class translation factor GTPase superfamily. Classic translation factor GTPase family. EF-Tu/EF-1A subfamily. In terms of assembly, monomer.

The protein localises to the cytoplasm. It carries out the reaction GTP + H2O = GDP + phosphate + H(+). Its function is as follows. GTP hydrolase that promotes the GTP-dependent binding of aminoacyl-tRNA to the A-site of ribosomes during protein biosynthesis. The polypeptide is Elongation factor Tu (Cereibacter sphaeroides (strain ATCC 17025 / ATH 2.4.3) (Rhodobacter sphaeroides)).